The following is a 151-amino-acid chain: MEISVFSIQKSSRDNFENEIQEYIKMSAKFAKINDKIIFNEKIARAQSSGRSDALRAYDEIYEPNLKGFCVMLDENGSQLDSQEFAQILNSNSQINFFIGGAYGLSQNLKDKAQKVVSLSKMTMAHKVAKLVLFEQIFRGLCINANHPYHK.

S-adenosyl-L-methionine contacts are provided by residues L73, G100, and L119–M124.

Belongs to the RNA methyltransferase RlmH family. As to quaternary structure, homodimer.

It is found in the cytoplasm. The catalysed reaction is pseudouridine(1915) in 23S rRNA + S-adenosyl-L-methionine = N(3)-methylpseudouridine(1915) in 23S rRNA + S-adenosyl-L-homocysteine + H(+). Functionally, specifically methylates the pseudouridine at position 1915 (m3Psi1915) in 23S rRNA. The chain is Ribosomal RNA large subunit methyltransferase H from Campylobacter concisus (strain 13826).